The primary structure comprises 593 residues: Chromodomain Y-like protein (593 aa).

The span at 1-14 shows a compositional bias: polar residues; sequence MGIGNSQPNSQEAQ. The segment at 1-30 is disordered; it reads MGIGNSQPNSQEAQLCTLPEKAEQPTDDNT. One can recognise a Chromo domain in the interval 56–116; the sequence is TQVESIVDKR…RHNERQKEGS (61 aa). Residues 56–304 form an interaction with EZH2 region; sequence TQVESIVDKR…TIQTSVTGVT (249 aa). Ser83 carries the post-translational modification Phosphoserine. Positions 110 to 158 are disordered; that stretch reads ERQKEGSLARASRASPSNARKQISRSTHSTLSKTNSKALVVGKDHESKS. The span at 117-129 shows a compositional bias: low complexity; sequence LARASRASPSNAR. Position 130 is an N6,N6,N6-trimethyllysine; by EHMT2; alternate (Lys130). Position 130 is an N6,N6-dimethyllysine; by EHMT2; alternate (Lys130). Position 130 is an N6-methyllysine; by EHMT2; alternate (Lys130). Polar residues predominate over residues 133 to 146; the sequence is SRSTHSTLSKTNSK. Residues Ser165, Ser196, and Ser211 each carry the phosphoserine modification. The segment at 200-223 is disordered; sequence GRTSVDGFQGESPEKLDPVDQGAE. The interval 357-589 is acetyl-CoA-binding domain; sequence SENNSLNPEV…DSMLKYLQRK (233 aa).

In terms of assembly, forms multimers and multimerization is required for stable binding to chromatin. Interacts with HDAC1 and HDAC2 via its C-terminal acetyl-CoA-binding domain. Interacts with EZH2, EED, SUZ12, REST, EHMT1 and EHMT2. Part of a complex containing at least CDYL, REST, WIZ, SETB1, EHMT1 and EHMT2. Part of a complex containing at least CDYL, MIER1, MIER2, HDAC1 and HDAC2. Interacts with CHAF1A and CHAF1B; bridging the CAF-1 complex to the MCM2-7 (MCM) complex. Interacts with MCM3 and MCM5; bridging the CAF-1 complex to the MCM2-7 (MCM) complex. Interacts with EHMT2 and PRDM9; interaction only takes place when PRDM9 is bound to hotspot DNA. As to expression, highly expressed in testis (at protein level). Expressed in the hippocampus (at protein level). Expressed in the medial prefrontal cortex, prelimbic cortex, intralimbic cortex and cingulate cortex area (at protein level). Isoform 1: Expressed as 2 transcripts encoding the same protein, a ubiquitous transcript and a highly expressed testis-specific transcript.

The protein localises to the nucleus. It is found in the chromosome. It carries out the reaction L-lysyl-[protein] + acetyl-CoA = N(6)-acetyl-L-lysyl-[protein] + CoA + H(+). It catalyses the reaction 3-hydroxybutanoyl-CoA = (2E)-butenoyl-CoA + H2O. Functionally, chromatin reader protein that recognizes and binds histone H3 trimethylated at 'Lys-9', dimethylated at 'Lys-27' and trimethylated at 'Lys-27' (H3K9me3, H3K27me2 and H3K27me3, respectively). Part of multimeric repressive chromatin complexes, where it is required for transmission and restoration of repressive histone marks, thereby preserving the epigenetic landscape. Required for chromatin targeting and maximal enzymatic activity of Polycomb repressive complex 2 (PRC2); acts as a positive regulator of PRC2 activity by bridging the pre-existing histone H3K27me3 and newly recruited PRC2 on neighboring nucleosomes. Acts as a corepressor for REST by facilitating histone-lysine N-methyltransferase EHMT2 recruitment and H3K9 dimethylation at REST target genes for repression. Involved in X chromosome inactivation in females: recruited to Xist RNA-coated X chromosome and facilitates propagation of H3K9me2 by anchoring EHMT2. Promotes EZH2 accumulation and H3K27me3 methylation at DNA double strand breaks (DSBs), thereby facilitating transcriptional repression at sites of DNA damage and homology-directed repair of DSBs. Required for neuronal migration during brain development by repressing expression of RHOA. By repressing the expression of SCN8A, contributes to the inhibition of intrinsic neuronal excitability and epileptogenesis. In addition to acting as a chromatin reader, acts as a hydro-lyase. Shows crotonyl-coA hydratase activity by mediating the conversion of crotonyl-CoA ((2E)-butenoyl-CoA) to beta-hydroxybutyryl-CoA (3-hydroxybutanoyl-CoA), thereby acting as a negative regulator of histone crotonylation. Histone crotonylation is required during spermatogenesis; down-regulation of histone crotonylation by CDYL regulates the reactivation of sex chromosome-linked genes in round spermatids and histone replacement in elongating spermatids. By regulating histone crotonylation and trimethylation of H3K27, may be involved in stress-induced depression-like behaviors, possibly by regulating VGF expression. May have histone acetyltransferase activity; such activity is however unsure in vivo. Not able to recognize and bind histone H3K9me3, histone H3K27me2 and histone H3K27me3, due to the presence of a N-terminal extension that inactivates the chromo domain. The chain is Chromodomain Y-like protein from Mus musculus (Mouse).